Reading from the N-terminus, the 423-residue chain is Replication factor C large subunit (423 aa).

Residue 50 to 57 (GPAGCGKT) coordinates ATP.

It belongs to the activator 1 small subunits family. RfcL subfamily. As to quaternary structure, heteromultimer composed of small subunits (RfcS) and large subunits (RfcL).

Functionally, part of the RFC clamp loader complex which loads the PCNA sliding clamp onto DNA. The chain is Replication factor C large subunit from Staphylothermus marinus (strain ATCC 43588 / DSM 3639 / JCM 9404 / F1).